The chain runs to 291 residues: Nucleotide-binding protein jk1004 (291 aa).

16–23 (GMSGAGRR) contacts ATP. 67 to 70 (DVRS) is a GTP binding site.

The protein belongs to the RapZ-like family.

Displays ATPase and GTPase activities. The protein is Nucleotide-binding protein jk1004 of Corynebacterium jeikeium (strain K411).